Reading from the N-terminus, the 197-residue chain is Ion-translocating oxidoreductase complex subunit B (197 aa).

The hydrophobic stretch occupies residues 1–26; that stretch reads MSTILIAIIALAVLAAVFGAILGFAS. The region spanning 32–90 is the 4Fe-4S domain; it reads EADPIVDQIDTILPQTQCGQCGYPGCRPYAEAIANGDKINKCPPGGQATIEKLADLMGV. [4Fe-4S] cluster is bound by residues Cys49, Cys52, Cys57, Cys73, Cys114, Cys117, Cys120, Cys124, Cys144, Cys147, Cys150, and Cys154. 2 consecutive 4Fe-4S ferredoxin-type domains span residues 105–134 and 135–164; these read TVAF…GGTK and ALHT…MIPV.

Belongs to the 4Fe4S bacterial-type ferredoxin family. RnfB subfamily. As to quaternary structure, the complex is composed of six subunits: RnfA, RnfB, RnfC, RnfD, RnfE and RnfG. [4Fe-4S] cluster serves as cofactor.

It is found in the cell inner membrane. Functionally, part of a membrane-bound complex that couples electron transfer with translocation of ions across the membrane. This is Ion-translocating oxidoreductase complex subunit B from Vibrio atlanticus (strain LGP32) (Vibrio splendidus (strain Mel32)).